A 584-amino-acid polypeptide reads, in one-letter code: Mitochondrial sodium/calcium exchanger protein (584 aa).

The N-terminal stretch at 1–26 is a signal peptide; sequence MAGRRLNLRWALSVLCVLLMAETVSG. At 27–95 the chain is on the extracellular side; sequence TRGSSTGAHI…GIFCHFPPSL (69 aa). Asn-60 carries N-linked (GlcNAc...) asparagine glycosylation. The chain crosses the membrane as a helical span at residues 96 to 116; sequence LPLAVTLYVSWLLYLFLILGV. Residues 117–140 are Cytoplasmic-facing; it reads TAAKFFCPNLSAISTTLKLSHNVA. A helical membrane pass occupies residues 141 to 161; sequence GVTFLAFGNGAPDIFSALVAF. The Extracellular portion of the chain corresponds to 162 to 168; sequence SDPHTAG. A helical membrane pass occupies residues 169 to 189; the sequence is LALGALFGAGVLVTTVVAGGI. Over 190–200 the chain is Cytoplasmic; it reads TILHPFMAASR. A helical transmembrane segment spans residues 201 to 221; it reads PFFRDIVFYMVAVFLTFLMLF. Over 222–226 the chain is Extracellular; it reads RGRVT. Residues 227–247 traverse the membrane as a helical segment; that stretch reads LAWALGYLGLYVFYVVTVILC. Residues 248–325 are Cytoplasmic-facing; sequence TWIYQRQRRG…KWRRKSAYWK (78 aa). Phosphoserine; by PKA is present on Ser-258. The helical transmembrane segment at 326–346 threads the bilayer; sequence ALKVFKLPVEFLLLLTVPVVD. Residues 347–360 lie on the Extracellular side of the membrane; it reads PDKDDQNWKRPLNC. A helical transmembrane segment spans residues 361–381; that stretch reads LHLVISPLVVVLTLQSGTYGV. The Cytoplasmic segment spans residues 382 to 383; it reads YE. Residues 384–404 traverse the membrane as a helical segment; the sequence is IGGLVPVWVVVVIAGTALASV. The Extracellular portion of the chain corresponds to 405–416; it reads TFFATSDSQPPR. A helical membrane pass occupies residues 417-437; the sequence is LHWLFAFLGFLTSALWINAAA. The Cytoplasmic portion of the chain corresponds to 438–445; the sequence is TEVVNILR. Residues 446-466 traverse the membrane as a helical segment; it reads SLGVVFRLSNTVLGLTLLAWG. Over 467-487 the chain is Extracellular; sequence NSIGDAFSDFTLARQGYPRMA. A helical transmembrane segment spans residues 488 to 508; the sequence is FSACFGGIIFNILVGVGLGCL. The Cytoplasmic portion of the chain corresponds to 509–524; that stretch reads LQISRSHTEVKLEPDG. A helical transmembrane segment spans residues 525 to 545; that stretch reads LLVWVLAGALGLSLVFSLVSV. Residues 546 to 558 lie on the Extracellular side of the membrane; sequence PLQCFQLSRVYGF. The helical transmembrane segment at 559–579 threads the bilayer; that stretch reads CLLLFYLNFLVVALLTEFGVI. Residues 580-584 lie on the Cytoplasmic side of the membrane; the sequence is HLKSM.

The protein belongs to the Ca(2+):cation antiporter (CaCA) (TC 2.A.19) family. SLC24A subfamily. Phosphorylation at Ser-258 by PKA prevents calcium overload. As to expression, present in pancreatic beta-cells (at protein level).

Its subcellular location is the mitochondrion inner membrane. The enzyme catalyses Ca(2+)(in) + 3 Na(+)(out) = Ca(2+)(out) + 3 Na(+)(in). The catalysed reaction is 3 Li(+)(out) + Ca(2+)(in) = 3 Li(+)(in) + Ca(2+)(out). With respect to regulation, inhibited by the sodium/calcium exchanger inhibitor CGP-37157. Strongly inhibited by zinc. Mitochondrial sodium/calcium antiporter that mediates sodium-dependent calcium efflux from mitochondrion, by mediating the exchange of 3 sodium ions per 1 calcium ion. Plays a central role in mitochondrial calcium homeostasis by mediating mitochondrial calcium extrusion: calcium efflux is essential for mitochondrial function and cell survival, notably in cardiomyocytes. Regulates rates of glucose-dependent insulin secretion in pancreatic beta-cells during the first phase of insulin secretion: acts by mediating efflux of calcium from mitochondrion, thereby affecting cytoplasmic calcium responses. Required for store-operated Ca(2+) entry (SOCE) and Ca(2+) release-activated Ca(2+) (CRAC) channel regulation: sodium transport by SLC8B1 leads to promote calcium-shuttling that modulates mitochondrial redox status, thereby regulating SOCE activity. Involved in B-lymphocyte chemotaxis. Able to transport Ca(2+) in exchange of either Li(+) or Na(+), explaining how Li(+) catalyzes Ca(2+) exchange. In contrast to other members of the family its function is independent of K(+). The chain is Mitochondrial sodium/calcium exchanger protein from Homo sapiens (Human).